The following is a 165-amino-acid chain: Phosphopantetheine adenylyltransferase (165 aa).

Thr9 serves as a coordination point for substrate. ATP contacts are provided by residues 9 to 10 (TF) and His17. Positions 41, 73, and 87 each coordinate substrate. Residues 88–90 (GLR), Glu98, and 123–129 (YQFISGT) each bind ATP.

It belongs to the bacterial CoaD family. As to quaternary structure, homohexamer. The cofactor is Mg(2+).

The protein resides in the cytoplasm. The enzyme catalyses (R)-4'-phosphopantetheine + ATP + H(+) = 3'-dephospho-CoA + diphosphate. It participates in cofactor biosynthesis; coenzyme A biosynthesis; CoA from (R)-pantothenate: step 4/5. Functionally, reversibly transfers an adenylyl group from ATP to 4'-phosphopantetheine, yielding dephospho-CoA (dPCoA) and pyrophosphate. In Burkholderia vietnamiensis (strain G4 / LMG 22486) (Burkholderia cepacia (strain R1808)), this protein is Phosphopantetheine adenylyltransferase.